A 165-amino-acid polypeptide reads, in one-letter code: Endoribonuclease YbeY (165 aa).

Residues His130, His134, and His140 each coordinate Zn(2+).

Belongs to the endoribonuclease YbeY family. It depends on Zn(2+) as a cofactor.

It localises to the cytoplasm. Functionally, single strand-specific metallo-endoribonuclease involved in late-stage 70S ribosome quality control and in maturation of the 3' terminus of the 16S rRNA. The chain is Endoribonuclease YbeY from Streptococcus agalactiae serotype Ia (strain ATCC 27591 / A909 / CDC SS700).